Reading from the N-terminus, the 420-residue chain is Nucleoporin NUP42 (420 aa).

A C3H1-type zinc finger spans residues 1 to 25 (MTICQFFLQGRCRFGDRCWNEHPGA). One copy of the FG 1 repeat lies at 14–15 (FG). The disordered stretch occupies residues 25–111 (ARGAGGARQP…FASPLSDEQK (87 aa)). A compositionally biased stretch (polar residues) spans 42-67 (SGNNRRGWNASSQRYSNVIQPSSFPK). FG repeat units follow at residues 82-83 (FG), 95-96 (FG), 218-219 (FG), 220-221 (FG), 228-229 (FG), 265-266 (FG), 271-272 (FG), 288-289 (FG), 345-346 (FG), and 364-365 (FG). Residues 87-102 (SGASTSRGFGSSQNPF) are compositionally biased toward polar residues. The disordered stretch occupies residues 323-345 (MAASPSGSTTAPPLRSGSSVVGF). The interval 365–420 (GGSGISTSVLASGAADNALFTPRDQLMKEELEQFQSQRFTLGKIPLKPPPVELLTV) is interaction with GLE1.

As to quaternary structure, probable component of the nuclear pore complex (NPC). Interacts with nuclear export protein NXF1. Interacts with GLE1. Able to form a heterotrimer with NUP155 and GLE1 in vitro. Interacts with XPO1. In terms of processing, O-glycosylated.

It localises to the nucleus. It is found in the nuclear pore complex. The protein localises to the nucleus membrane. In terms of biological role, required for the export of mRNAs containing poly(A) tails from the nucleus into the cytoplasm. The polypeptide is Nucleoporin NUP42 (Nup42) (Mus musculus (Mouse)).